The sequence spans 346 residues: Phosphoribosylformylglycinamidine cyclo-ligase (346 aa).

Belongs to the AIR synthase family.

The protein resides in the cytoplasm. The catalysed reaction is 2-formamido-N(1)-(5-O-phospho-beta-D-ribosyl)acetamidine + ATP = 5-amino-1-(5-phospho-beta-D-ribosyl)imidazole + ADP + phosphate + H(+). It functions in the pathway purine metabolism; IMP biosynthesis via de novo pathway; 5-amino-1-(5-phospho-D-ribosyl)imidazole from N(2)-formyl-N(1)-(5-phospho-D-ribosyl)glycinamide: step 2/2. This is Phosphoribosylformylglycinamidine cyclo-ligase from Shewanella piezotolerans (strain WP3 / JCM 13877).